The sequence spans 141 residues: Small ribosomal subunit protein uS19 (141 aa).

Belongs to the universal ribosomal protein uS19 family.

Functionally, protein S19 forms a complex with S13 that binds strongly to the 16S ribosomal RNA. The polypeptide is Small ribosomal subunit protein uS19 (Halorubrum lacusprofundi (strain ATCC 49239 / DSM 5036 / JCM 8891 / ACAM 34)).